Consider the following 145-residue polypeptide: Large ribosomal subunit protein uL11 (145 aa).

It belongs to the universal ribosomal protein uL11 family. In terms of assembly, part of the ribosomal stalk of the 50S ribosomal subunit. Interacts with L10 and the large rRNA to form the base of the stalk. L10 forms an elongated spine to which L12 dimers bind in a sequential fashion forming a multimeric L10(L12)X complex. Post-translationally, one or more lysine residues are methylated.

Its function is as follows. Forms part of the ribosomal stalk which helps the ribosome interact with GTP-bound translation factors. The protein is Large ribosomal subunit protein uL11 of Hydrogenobaculum sp. (strain Y04AAS1).